Here is a 227-residue protein sequence, read N- to C-terminus: Orotidine 5'-phosphate decarboxylase (227 aa).

Substrate contacts are provided by residues Asp-8, Lys-30, 59 to 68 (DLKLYDIPYT), Thr-118, Arg-178, Gln-187, Gly-207, and Arg-208. The active-site Proton donor is the Lys-61.

The protein belongs to the OMP decarboxylase family. Type 1 subfamily. In terms of assembly, homodimer.

The enzyme catalyses orotidine 5'-phosphate + H(+) = UMP + CO2. Its pathway is pyrimidine metabolism; UMP biosynthesis via de novo pathway; UMP from orotate: step 2/2. In terms of biological role, catalyzes the decarboxylation of orotidine 5'-monophosphate (OMP) to uridine 5'-monophosphate (UMP). The polypeptide is Orotidine 5'-phosphate decarboxylase (Helicobacter pylori (strain Shi470)).